The following is a 795-amino-acid chain: MIPVAEFKQFTEQQPAFKVLKPWWDVLAEYLTVAMLMIGVFGCTLQVTQDKIICLPSHESRENISGAPCQQLLPQGISEQMGGLRELSGLKNNLDLQQYSFINQLCYETALHWYAKYFPYLVVIHTLIFMVCTSFWFKFPGTSSKIEHFISILGKCFDSPWTTRALSEVSGENHKGPASGRAMVTTVTTTGAGSGKVGEGEKEKVLIEPEKVVSEPPVVTLLDKKEGEQAKALFEKVKKFRVHVEEGDILYSMYIRQTVLKVCKFFAILVYNLIYVEKISFLVACRVETSEITGYASFCCNHTKAHLFSKLAFCYISFVCVYGITCLYTLYWLFHRPLKEYSFRSVREETGMNDIPDVKNDFAFMLHLIDQYDSLYSKRFAVFLSEVSESRLKQLNLNHEWTPEKLRQKLQRNMRGRLELSLCMLPGLPDTVFELSEVEALRLEAICDISFPPGLSQLVNLQELSLLHSPARLPFSSQIFLRDRLKVICVKFEELREVPLWVFGLRGLEELHLEGLFPPEMARGATLESLRELKQLKVLSLRSNAGKVPASVTDVAGHLQRLSLHNDGARLLALNSLKKLAVLRELELVACGLERIPHAIFSLGALQELDLKDNHLRSIEEILSFQHCRKLVTLRLWHNQIAYVPEHVRKLRSLEQLYLSHNKLETLPTQLGQCFGLRLLDLSHNGLRSLPPELGLLQSLQHLALSYNALESLPDELFFCHKLRTLLLGYNHLTQLSPDVAALQALSRLELKGNRLETLPEELGDCKGLKKSGLLVEDTLYEGLPAEVREKMEEE.

The Cytoplasmic portion of the chain corresponds to 1-22; that stretch reads MIPVAEFKQFTEQQPAFKVLKP. Residues 23–43 form a helical membrane-spanning segment; it reads WWDVLAEYLTVAMLMIGVFGC. Topologically, residues 44-116 are extracellular; sequence TLQVTQDKII…YETALHWYAK (73 aa). Cysteine 54 and cysteine 300 form a disulfide bridge. An N-linked (GlcNAc...) asparagine glycan is attached at asparagine 63. A helical membrane pass occupies residues 117 to 137; the sequence is YFPYLVVIHTLIFMVCTSFWF. At 138–264 the chain is on the cytoplasmic side; it reads KFPGTSSKIE…IRQTVLKVCK (127 aa). Residues 265-285 form a helical membrane-spanning segment; sequence FFAILVYNLIYVEKISFLVAC. Residues 286-312 are Extracellular-facing; the sequence is RVETSEITGYASFCCNHTKAHLFSKLA. N-linked (GlcNAc...) asparagine glycosylation is present at asparagine 301. A helical membrane pass occupies residues 313–333; that stretch reads FCYISFVCVYGITCLYTLYWL. Residues 334–795 lie on the Cytoplasmic side of the membrane; the sequence is FHRPLKEYSF…AEVREKMEEE (462 aa). LRR repeat units follow at residues 535–556, 558–578, 582–603, 605–626, 630–651, 653–674, 676–697, 699–720, 722–744, and 745–766; these read QLKV…TDVA, HLQR…NSLK, VLRE…IFSL, ALQE…LSFQ, KLVT…VRKL, SLEQ…LGQC, GLRL…LGLL, SLQH…LFFC, KLRT…AALQ, and ALSR…LGDC.

It belongs to the LRRC8 family. Heterohexamer; oligomerizes with other LRRC8 proteins (LRRC8A, LRRC8C, LRRC8D and/or LRRC8B) to form a heterohexamer. In vivo, the subunit composition may depend primarily on expression levels, and heterooligomeric channels containing various proportions of the different LRRC8 proteins may coexist.

The protein localises to the cell membrane. It is found in the endoplasmic reticulum membrane. The protein resides in the lysosome membrane. It catalyses the reaction chloride(in) = chloride(out). The enzyme catalyses iodide(out) = iodide(in). It carries out the reaction taurine(out) = taurine(in). The catalysed reaction is 2',3'-cGAMP(out) = 2',3'-cGAMP(in). Functionally, non-essential component of the volume-regulated anion channel (VRAC, also named VSOAC channel), an anion channel required to maintain a constant cell volume in response to extracellular or intracellular osmotic changes. The VRAC channel conducts iodide better than chloride and can also conduct organic osmolytes like taurine. Mediates efflux of amino acids, such as aspartate, in response to osmotic stress. The VRAC channel also mediates transport of immunoreactive cyclic dinucleotide GMP-AMP (2'-3'-cGAMP), an immune messenger produced in response to DNA virus in the cytosol. Channel activity requires LRRC8A plus at least one other family member (LRRC8B, LRRC8C, LRRC8D or LRRC8E); channel characteristics depend on the precise subunit composition. Also plays a role in lysosome homeostasis by forming functional lysosomal VRAC channels in response to low cytoplasmic ionic strength condition: lysosomal VRAC channels are necessary for the formation of large lysosome-derived vacuoles, which store and then expel excess water to maintain cytosolic water homeostasis. In Mus musculus (Mouse), this protein is Volume-regulated anion channel subunit LRRC8E.